A 425-amino-acid chain; its full sequence is Pectate lyase L (425 aa).

A signal peptide spans 1 to 25 (MKYLNCFISTGLAAFFLVNSTSVLA). C28 and C114 are disulfide-bonded. Ca(2+) is bound by residues D209, D233, D234, and D237. Residue K273 is the Proton acceptor of the active site. The Ca(2+) site is built by N402, S413, A416, D418, and E423.

This sequence belongs to the polysaccharide lyase 9 family. The cofactor is Ca(2+).

The protein localises to the secreted. The enzyme catalyses Eliminative cleavage of (1-&gt;4)-alpha-D-galacturonan to give oligosaccharides with 4-deoxy-alpha-D-galact-4-enuronosyl groups at their non-reducing ends.. It participates in glycan metabolism; pectin degradation; 2-dehydro-3-deoxy-D-gluconate from pectin: step 2/5. Functionally, presents an endo-cleaving activity on polygalacturonate or partially methylated pectin. Is effective in the maceration of plant tissue, and has an important role in soft-rot disease. Is 280-fold less active against polygalacturonate than the major pectate lyase PelB. When assayed on polygalacturonate, PelL releases oligogalacturonates of different sizes; upon prolonged incubation, PelL degrades the primary products to unsaturated tetramer and pentamer in addition to unsaturated dimer and trimer. When assayed on oligogalacturonates (degrees of polymerization of 2 to 8), it preferentially forms unsaturated tetramer, and displays the highest activity on the octamer. The sequence is that of Pectate lyase L (pelL) from Dickeya dadantii (strain 3937) (Erwinia chrysanthemi (strain 3937)).